The following is a 270-amino-acid chain: Nuclear receptor-interacting protein 2 (270 aa).

A compositionally biased stretch (basic and acidic residues) spans 1–27; it reads MSTGQEARRDEGDSRKEQEASLRDRAH. A disordered region spans residues 1-33; sequence MSTGQEARRDEGDSRKEQEASLRDRAHLSQQRQ. Residues 61–99 form an interaction with NR1F2 region; it reads KDLQPHSVIQRRLVEGNQRRLQGESPLLQALIRGHDSSR. Residues 192–196 carry the LXXLL motif motif; it reads LQTLL.

As to quaternary structure, interacts with NR1F2, RARA and THRB in a ligand-dependent manner. In terms of tissue distribution, expression is restricted to the central nervous system (neurons in the dentate gyrus of the hippocampus, the amygdala, thalamic and hypothalamic regions).

It localises to the nucleus. Functionally, down-regulates transcriptional activation by nuclear receptors, such as NR1F2. The protein is Nuclear receptor-interacting protein 2 (Nrip2) of Mus musculus (Mouse).